Consider the following 604-residue polypeptide: Glutamine--fructose-6-phosphate aminotransferase [isomerizing] (604 aa).

Cys-2 acts as the Nucleophile; for GATase activity in catalysis. The region spanning Cys-2–Glu-216 is the Glutamine amidotransferase type-2 domain. 2 consecutive SIS domains span residues Leu-281 to Ala-420 and Val-453 to Pro-594. Lys-599 serves as the catalytic For Fru-6P isomerization activity.

As to quaternary structure, homodimer.

It localises to the cytoplasm. It catalyses the reaction D-fructose 6-phosphate + L-glutamine = D-glucosamine 6-phosphate + L-glutamate. In terms of biological role, catalyzes the first step in hexosamine metabolism, converting fructose-6P into glucosamine-6P using glutamine as a nitrogen source. In Thermus thermophilus (strain ATCC BAA-163 / DSM 7039 / HB27), this protein is Glutamine--fructose-6-phosphate aminotransferase [isomerizing].